The primary structure comprises 603 residues: Trihelix transcription factor DF1 (603 aa).

Positions 60-118 (NRWPRQETLALLKIRSDMGIAFRDASVKGPLWEEVSRKMAEHGYIRNAKKCKEKFENVY) constitute a Myb-like 1 domain. 4 disordered regions span residues 149-201 (QSTT…SSIP), 220-249 (LSDN…TRKK), 333-408 (KQPN…SSSR), and 532-603 (QWPP…TNNL). Low complexity-rich tracts occupy residues 168–178 (NNNNNNNNNNN), 189–198 (TTVMPTLPSS), 221–236 (SDNS…TSSD), and 344–362 (PQQV…QQPP). Residues 363-376 (QRSPPPQPPAPLPQ) are compositionally biased toward pro residues. The span at 381–408 (VVSTLDTTKTDNGGDQNMTPAASASSSR) shows a compositional bias: polar residues. The region spanning 401-465 (AASASSSRWP…RCKEKWENIN (65 aa)) is the Myb-like 2 domain. Over residues 532–555 (QWPPAVTTATTTPAAAQPDQQSQP) the composition is skewed to low complexity. The segment covering 559-586 (NFDDEEGTDEEYDDEDEEEENEEEEGGE) has biased composition (acidic residues). The segment covering 593–603 (NNNNNKTTNNL) has biased composition (low complexity).

It is found in the nucleus. In terms of biological role, transcription repressor that negatively regulates root hair growth by directly binding RSL4 promoter and repressing RSL4 expression. Required for the synthesis of seed coat mucilage. The chain is Trihelix transcription factor DF1 from Arabidopsis thaliana (Mouse-ear cress).